Reading from the N-terminus, the 249-residue chain is Mediator of RNA polymerase II transcription subunit 8 (249 aa).

Residues 1-26 adopt a coiled-coil conformation; sequence MQREEKQLDMLLEAVLNRLNDLKHSI. 2 stretches are compositionally biased toward polar residues: residues 215–224 and 235–249; these read SPMSAVSPSG and IKTN…HPYR. The segment at 215–249 is disordered; the sequence is SPMSAVSPSGNAPMGKMPSGIKTNIKSANQVHPYR.

It belongs to the Mediator complex subunit 8 family. As to quaternary structure, component of the Mediator complex.

It localises to the nucleus. Its function is as follows. Component of the Mediator complex, a coactivator involved in the regulated transcription of nearly all RNA polymerase II-dependent genes. Mediator functions as a bridge to convey information from gene-specific regulatory proteins to the basal RNA polymerase II transcription machinery. Mediator is recruited to promoters by direct interactions with regulatory proteins and serves as a scaffold for the assembly of a functional preinitiation complex with RNA polymerase II and the general transcription factors. This Anopheles gambiae (African malaria mosquito) protein is Mediator of RNA polymerase II transcription subunit 8 (MED8).